A 542-amino-acid chain; its full sequence is MTRYIFVTGGVVSSLGKGIASASLAAILEARGLKVTMLKLDPYINVDPGTMSPFQHGEVFVTHDGAETDLDLGHYERFIRTTMTQNNNFTTGRIYEHVLRKERRGDYLGATIQVIPHITDEIKRRIIKGAGDADVALVEIGGTVGDIESQPFLEAIRQLRVEVGSKRAMLMHLTLVPYIATAGETKTKPTQHSVKELRSIGLQPDVLICRSDHPVDASSRRKIALFTNVEERAVISLEDVDTIYKIPGVLHAQGLDDFVVERFGLQCNGADLSEWDKVVDAKLNPEHEVTIAMVGKYMELLDAYKSLIEAMSHAGITNRTKVNLRYIDSEDIENQGTSLLEGADAILVPGGFGLRGVEGKITAVQYARENKVPYLGICLGMQVAVIEFARNVMGWKDANSTEFDRNSGHPVVGLITEWADATGAVETRDEASDLGGTMRLGAQDCQLAAGSKVHDCYGKDVITERHRHRYEVNNNLLPQLVEAGLVVSGRSEDGALVEVVESKDHPWFVACQFHPEFTSTPRDGHPLFSGFVKAALAQKNKA.

The interval 1 to 265 (MTRYIFVTGG…DDFVVERFGL (265 aa)) is amidoligase domain. Ser-13 contacts CTP. Ser-13 serves as a coordination point for UTP. Residues 14 to 19 (SLGKGI) and Asp-71 each bind ATP. Residues Asp-71 and Glu-139 each coordinate Mg(2+). CTP-binding positions include 146–148 (DIE), 186–191 (KTKPTQ), and Lys-222. UTP contacts are provided by residues 186–191 (KTKPTQ) and Lys-222. The Glutamine amidotransferase type-1 domain occupies 290–541 (TIAMVGKYME…VKAALAQKNK (252 aa)). An L-glutamine-binding site is contributed by Gly-351. Residue Cys-378 is the Nucleophile; for glutamine hydrolysis of the active site. L-glutamine is bound by residues 379–382 (LGMQ), Glu-402, and Arg-469. Residues His-514 and Glu-516 contribute to the active site.

It belongs to the CTP synthase family. Homotetramer.

The enzyme catalyses UTP + L-glutamine + ATP + H2O = CTP + L-glutamate + ADP + phosphate + 2 H(+). The catalysed reaction is L-glutamine + H2O = L-glutamate + NH4(+). It catalyses the reaction UTP + NH4(+) + ATP = CTP + ADP + phosphate + 2 H(+). It functions in the pathway pyrimidine metabolism; CTP biosynthesis via de novo pathway; CTP from UDP: step 2/2. Allosterically activated by GTP, when glutamine is the substrate; GTP has no effect on the reaction when ammonia is the substrate. The allosteric effector GTP functions by stabilizing the protein conformation that binds the tetrahedral intermediate(s) formed during glutamine hydrolysis. Inhibited by the product CTP, via allosteric rather than competitive inhibition. Its function is as follows. Catalyzes the ATP-dependent amination of UTP to CTP with either L-glutamine or ammonia as the source of nitrogen. Regulates intracellular CTP levels through interactions with the four ribonucleotide triphosphates. The chain is CTP synthase from Pseudomonas putida (strain ATCC 700007 / DSM 6899 / JCM 31910 / BCRC 17059 / LMG 24140 / F1).